The chain runs to 474 residues: tRNA-2-methylthio-N(6)-dimethylallyladenosine synthase (474 aa).

An MTTase N-terminal domain is found at 3-120; sequence KKLHIKTWGC…LPEMIDQIEA (118 aa). [4Fe-4S] cluster is bound by residues Cys12, Cys49, Cys83, Cys157, Cys161, and Cys164. In terms of domain architecture, Radical SAM core spans 143–375; sequence RADGPSAFVS…QDRITQQAMR (233 aa). A TRAM domain is found at 378–441; it reads RQMLGTVQRI…TNSLRGNFIR (64 aa).

This sequence belongs to the methylthiotransferase family. MiaB subfamily. Monomer. It depends on [4Fe-4S] cluster as a cofactor.

It is found in the cytoplasm. It catalyses the reaction N(6)-dimethylallyladenosine(37) in tRNA + (sulfur carrier)-SH + AH2 + 2 S-adenosyl-L-methionine = 2-methylsulfanyl-N(6)-dimethylallyladenosine(37) in tRNA + (sulfur carrier)-H + 5'-deoxyadenosine + L-methionine + A + S-adenosyl-L-homocysteine + 2 H(+). In terms of biological role, catalyzes the methylthiolation of N6-(dimethylallyl)adenosine (i(6)A), leading to the formation of 2-methylthio-N6-(dimethylallyl)adenosine (ms(2)i(6)A) at position 37 in tRNAs that read codons beginning with uridine. The sequence is that of tRNA-2-methylthio-N(6)-dimethylallyladenosine synthase from Shewanella woodyi (strain ATCC 51908 / MS32).